Consider the following 205-residue polypeptide: Large ribosomal subunit protein uL3 (205 aa).

Belongs to the universal ribosomal protein uL3 family. As to quaternary structure, part of the 50S ribosomal subunit. Forms a cluster with proteins L14 and L19.

In terms of biological role, one of the primary rRNA binding proteins, it binds directly near the 3'-end of the 23S rRNA, where it nucleates assembly of the 50S subunit. This is Large ribosomal subunit protein uL3 from Bacteroides thetaiotaomicron (strain ATCC 29148 / DSM 2079 / JCM 5827 / CCUG 10774 / NCTC 10582 / VPI-5482 / E50).